The chain runs to 183 residues: Holliday junction branch migration complex subunit RuvA (183 aa).

The domain I stretch occupies residues 1-63 (MTVGLIGVVE…EDAHLLYGFL (63 aa)). Residues 64 to 141 (EESEKILFER…IQDETKPVHN (78 aa)) form a domain II region. Asn-141 is a region of interest (flexible linker). The segment at 141 to 183 (NEAFLALESLGFKSAEINPILKKLKPNLSVEEAIKEALQQLRS) is domain III.

This sequence belongs to the RuvA family. Homotetramer. Forms an RuvA(8)-RuvB(12)-Holliday junction (HJ) complex. HJ DNA is sandwiched between 2 RuvA tetramers; dsDNA enters through RuvA and exits via RuvB. An RuvB hexamer assembles on each DNA strand where it exits the tetramer. Each RuvB hexamer is contacted by two RuvA subunits (via domain III) on 2 adjacent RuvB subunits; this complex drives branch migration. In the full resolvosome a probable DNA-RuvA(4)-RuvB(12)-RuvC(2) complex forms which resolves the HJ.

The protein localises to the cytoplasm. In terms of biological role, the RuvA-RuvB-RuvC complex processes Holliday junction (HJ) DNA during genetic recombination and DNA repair, while the RuvA-RuvB complex plays an important role in the rescue of blocked DNA replication forks via replication fork reversal (RFR). RuvA specifically binds to HJ cruciform DNA, conferring on it an open structure. The RuvB hexamer acts as an ATP-dependent pump, pulling dsDNA into and through the RuvAB complex. HJ branch migration allows RuvC to scan DNA until it finds its consensus sequence, where it cleaves and resolves the cruciform DNA. The sequence is that of Holliday junction branch migration complex subunit RuvA from Helicobacter acinonychis (strain Sheeba).